Here is an 82-residue protein sequence, read N- to C-terminus: UPF0153 protein VC_1057 (82 aa).

It belongs to the UPF0153 family.

This Vibrio cholerae serotype O1 (strain ATCC 39315 / El Tor Inaba N16961) protein is UPF0153 protein VC_1057.